The primary structure comprises 133 residues: ATP synthase epsilon chain (133 aa).

It belongs to the ATPase epsilon chain family. As to quaternary structure, F-type ATPases have 2 components, CF(1) - the catalytic core - and CF(0) - the membrane proton channel. CF(1) has five subunits: alpha(3), beta(3), gamma(1), delta(1), epsilon(1). CF(0) has three main subunits: a, b and c.

It is found in the cell membrane. Functionally, produces ATP from ADP in the presence of a proton gradient across the membrane. The polypeptide is ATP synthase epsilon chain (atpC) (Alkalihalophilus pseudofirmus (strain ATCC BAA-2126 / JCM 17055 / OF4) (Bacillus pseudofirmus)).